The following is a 223-amino-acid chain: Type III pantothenate kinase (223 aa).

17 to 24 (DIGNTHIH) contributes to the ATP binding site. Residues Y81 and 85-88 (GIDR) contribute to the substrate site. D87 functions as the Proton acceptor in the catalytic mechanism. Residue D102 participates in K(+) binding. S105 contacts ATP. T157 is a substrate binding site.

It belongs to the type III pantothenate kinase family. As to quaternary structure, homodimer. NH4(+) serves as cofactor. It depends on K(+) as a cofactor.

It localises to the cytoplasm. It carries out the reaction (R)-pantothenate + ATP = (R)-4'-phosphopantothenate + ADP + H(+). Its pathway is cofactor biosynthesis; coenzyme A biosynthesis; CoA from (R)-pantothenate: step 1/5. In terms of biological role, catalyzes the phosphorylation of pantothenate (Pan), the first step in CoA biosynthesis. The protein is Type III pantothenate kinase of Helicobacter pylori (strain HPAG1).